The following is a 423-amino-acid chain: GTPase HflX (423 aa).

Positions 201–363 (IQLALVGYTN…KIEQALKGMM (163 aa)) constitute a Hflx-type G domain. Residues 207–214 (GYTNAGKS), 232–236 (FATLD), 254–257 (DTVG), 320–323 (NKAD), and 341–343 (SAY) contribute to the GTP site. Mg(2+) is bound by residues serine 214 and threonine 234.

This sequence belongs to the TRAFAC class OBG-HflX-like GTPase superfamily. HflX GTPase family. As to quaternary structure, monomer. Associates with the 50S ribosomal subunit. Mg(2+) serves as cofactor.

The protein localises to the cytoplasm. GTPase that associates with the 50S ribosomal subunit and may have a role during protein synthesis or ribosome biogenesis. This chain is GTPase HflX, found in Alkalihalophilus pseudofirmus (strain ATCC BAA-2126 / JCM 17055 / OF4) (Bacillus pseudofirmus).